Here is an 89-residue protein sequence, read N- to C-terminus: DNA-directed RNA polymerase subunit omega (89 aa).

The protein belongs to the RNA polymerase subunit omega family. In terms of assembly, the RNAP catalytic core consists of 2 alpha, 1 beta, 1 beta' and 1 omega subunit. When a sigma factor is associated with the core the holoenzyme is formed, which can initiate transcription.

The catalysed reaction is RNA(n) + a ribonucleoside 5'-triphosphate = RNA(n+1) + diphosphate. In terms of biological role, promotes RNA polymerase assembly. Latches the N- and C-terminal regions of the beta' subunit thereby facilitating its interaction with the beta and alpha subunits. The polypeptide is DNA-directed RNA polymerase subunit omega (Clavibacter michiganensis subsp. michiganensis (strain NCPPB 382)).